We begin with the raw amino-acid sequence, 344 residues long: Protein BIM1 (344 aa).

Serine 2 is modified (N-acetylserine). Positions 6–107 (GESRTELLTW…FLQWLKKHWI (102 aa)) constitute a Calponin-homology (CH) domain. The segment at 126–173 (IITNNSATKPRTVSNPTTAKRSSSTGTGSAMSGGLATRHSSLGINGSR) is disordered. The segment covering 127-146 (ITNNSATKPRTVSNPTTAKR) has biased composition (polar residues). Positions 147–159 (SSSTGTGSAMSGG) are enriched in low complexity. A Phosphoserine modification is found at serine 157. Polar residues predominate over residues 163–173 (RHSSLGINGSR). An EB1 C-terminal domain is found at 188–281 (ELTKSQETIG…LYATAEGFEM (94 aa)). Residues 292–312 (NLGEHGTVPNQGGYANSNGEV) form a disordered region.

It belongs to the MAPRE family.

It localises to the cytoplasm. Its subcellular location is the cytoskeleton. Binds microtubules. The sequence is that of Protein BIM1 (BIM1) from Saccharomyces cerevisiae (strain ATCC 204508 / S288c) (Baker's yeast).